Consider the following 517-residue polypeptide: Protein AGENET DOMAIN (AGD)-CONTAINING P1 (517 aa).

Residues 1–35 (MLRPRRSLGVSSPAKQRKKAAPKNSMATRANRKRL) are disordered. Plant Agenet, chromatin-binding stretches follow at residues 37 to 111 (SYLK…PPMS) and 117 to 173 (KKIV…EWVD). The interval 177–202 (KPPLEETEEEEDESEEDKLDDSEDEE) is disordered. Positions 181–202 (EETEEEEDESEEDKLDDSEDEE) are enriched in acidic residues. Plant Agenet, chromatin-binding stretches follow at residues 219–287 (QMFS…PRDE), 289–345 (IDFA…DWVD), 378–446 (QAFS…LESV), and 449–505 (SPFE…EWID).

In terms of tissue distribution, expressed ubiquitously during vegetative stage, in meristems (e.g. root tips and shoot apical meristem), and in ovules and young seeds during reproductive stage.

Its subcellular location is the nucleus. In terms of biological role, heterochromatin-binding protein that preferentially occupies long transposons and specifically recognizes the histone H3 'Lys-9' methylation (H3K9me) marks, with a stronger affinity for dimethylated H3K9 (H3K9me2). Required for transcriptional silencing, non-CG DNA methylation (e.g. CHG and CHH regions), and H3K9 dimethylation (H3K9me2) at some loci. Mediates heterochromatin phase separation and chromocenter formation. The polypeptide is Protein AGENET DOMAIN (AGD)-CONTAINING P1 (Arabidopsis thaliana (Mouse-ear cress)).